We begin with the raw amino-acid sequence, 132 residues long: ATP synthase epsilon chain (132 aa).

This sequence belongs to the ATPase epsilon chain family. F-type ATPases have 2 components, CF(1) - the catalytic core - and CF(0) - the membrane proton channel. CF(1) has five subunits: alpha(3), beta(3), gamma(1), delta(1), epsilon(1). CF(0) has three main subunits: a, b and c.

It localises to the cell inner membrane. Produces ATP from ADP in the presence of a proton gradient across the membrane. This chain is ATP synthase epsilon chain, found in Anaeromyxobacter sp. (strain K).